Here is a 360-residue protein sequence, read N- to C-terminus: Phospho-N-acetylmuramoyl-pentapeptide-transferase (360 aa).

10 helical membrane-spanning segments follow: residues 21–41 (YITF…LWIG), 73–93 (TMGG…WADL), 98–118 (VWFV…DDYW), 132–152 (WKYF…YAIG), 168–188 (VMPQ…VGTS), 199–219 (GLAI…AWAT), 236–256 (SGEL…FLWF), 263–283 (VFMG…IAVL), 288–308 (LLLV…ILQV), and 338–358 (VIVR…VTLK).

The protein belongs to the glycosyltransferase 4 family. MraY subfamily. It depends on Mg(2+) as a cofactor.

The protein localises to the cell inner membrane. It catalyses the reaction UDP-N-acetyl-alpha-D-muramoyl-L-alanyl-gamma-D-glutamyl-meso-2,6-diaminopimeloyl-D-alanyl-D-alanine + di-trans,octa-cis-undecaprenyl phosphate = di-trans,octa-cis-undecaprenyl diphospho-N-acetyl-alpha-D-muramoyl-L-alanyl-D-glutamyl-meso-2,6-diaminopimeloyl-D-alanyl-D-alanine + UMP. The protein operates within cell wall biogenesis; peptidoglycan biosynthesis. Catalyzes the initial step of the lipid cycle reactions in the biosynthesis of the cell wall peptidoglycan: transfers peptidoglycan precursor phospho-MurNAc-pentapeptide from UDP-MurNAc-pentapeptide onto the lipid carrier undecaprenyl phosphate, yielding undecaprenyl-pyrophosphoryl-MurNAc-pentapeptide, known as lipid I. In Glaesserella parasuis serovar 5 (strain SH0165) (Haemophilus parasuis), this protein is Phospho-N-acetylmuramoyl-pentapeptide-transferase.